Consider the following 212-residue polypeptide: LexA repressor (212 aa).

A DNA-binding region (H-T-H motif) is located at residues 26–46 (VREIGEAVGLSSTSTVHGHID). Residues S128 and K171 each act as for autocatalytic cleavage activity in the active site.

This sequence belongs to the peptidase S24 family. As to quaternary structure, homodimer.

The catalysed reaction is Hydrolysis of Ala-|-Gly bond in repressor LexA.. Represses a number of genes involved in the response to DNA damage (SOS response), including recA and lexA. In the presence of single-stranded DNA, RecA interacts with LexA causing an autocatalytic cleavage which disrupts the DNA-binding part of LexA, leading to derepression of the SOS regulon and eventually DNA repair. The protein is LexA repressor of Oenococcus oeni (strain ATCC BAA-331 / PSU-1).